The chain runs to 128 residues: Small ribosomal subunit protein eS8 (128 aa).

The segment at 1-41 is disordered; it reads MSYYQGNDSRKITGGQKGKNRDKRKYELGSPPTETKISDKD.

It belongs to the eukaryotic ribosomal protein eS8 family. As to quaternary structure, part of the 30S ribosomal subunit.

The sequence is that of Small ribosomal subunit protein eS8 from Sulfolobus acidocaldarius (strain ATCC 33909 / DSM 639 / JCM 8929 / NBRC 15157 / NCIMB 11770).